The primary structure comprises 555 residues: MVSAKKVPAIAMSFGVSFALLHFLCLAACLNESPGQNQKEEKLCPENFTRILDSLLDGYDNRLRPGFGGPVTEVKTDIYVTSFGPVSDVEMEYTMDVFFRQTWIDKRLKYDGPIEILRLNNMMVTKVWTPDTFFRNGKKSVSHNMTAPNKLFRIMRNGTILYTMRLTISAECPMRLVDFPMDGHACPLKFGSYAYPKSEMIYTWTKGPEKSVEVPKESSSLVQYDLIGQTVSSETIKSITGEYIVMTVYFHLRRKMGYFMIQTYIPCIMTVILSQVSFWINKESVPARTVFGITTVLTMTTLSISARHSLPKVSYATAMDWFIAVCFAFVFSALIEFAAVNYFTNVQMEKAKRKTSKAPQEISAAPVLREKHPETPLQNTNANLSMRKRANALVHSESDVGSRTDVGNHSSKSSTVVQGSSEATPQSYLASSPNPFSRANAAETISAARAIPSALPSTPSRTGYVPRQVPVGSASTQHVFGSRLQRIKTTVNSIGTSGKLSATTTPSAPPPSGSGTSKIDKYARILFPVTFGAFNMVYWVVYLSKDTMEKSESLM.

The N-terminal stretch at 1–35 (MVSAKKVPAIAMSFGVSFALLHFLCLAACLNESPG) is a signal peptide. The Extracellular portion of the chain corresponds to 36–259 (QNQKEEKLCP…FHLRRKMGYF (224 aa)). N-linked (GlcNAc...) asparagine glycosylation is present at Asn-47. Arg-100 lines the 4-aminobutanoate pocket. Asn-144 and Asn-157 each carry an N-linked (GlcNAc...) asparagine glycan. Thr-163 is a binding site for 4-aminobutanoate. A disulfide bridge connects residues Cys-172 and Cys-186. The chain crosses the membrane as a helical span at residues 260–280 (MIQTYIPCIMTVILSQVSFWI). The Cytoplasmic portion of the chain corresponds to 281-284 (NKES). A helical transmembrane segment spans residues 285 to 305 (VPARTVFGITTVLTMTTLSIS). The Extracellular segment spans residues 306-318 (ARHSLPKVSYATA). Residues 319-341 (MDWFIAVCFAFVFSALIEFAAVN) traverse the membrane as a helical segment. Residues 342–518 (YFTNVQMEKA…PPPSGSGTSK (177 aa)) are Cytoplasmic-facing. Disordered regions lie at residues 354–435 (KTSK…SPNP) and 495–516 (GTSG…GSGT). The segment covering 410–421 (SSKSSTVVQGSS) has biased composition (low complexity). Positions 422–435 (EATPQSYLASSPNP) are enriched in polar residues. Residues 519–545 (IDKYARILFPVTFGAFNMVYWVVYLSK) traverse the membrane as a helical segment. At 546 to 555 (DTMEKSESLM) the chain is on the extracellular side.

Belongs to the ligand-gated ion channel (TC 1.A.9) family. Gamma-aminobutyric acid receptor (TC 1.A.9.5) subfamily. GABRA4 sub-subfamily. As to quaternary structure, heteropentamer, formed by a combination of alpha (GABRA1-6), beta (GABRB1-3), gamma (GABRG1-3), delta (GABRD), epsilon (GABRE), rho (GABRR1-3), pi (GABRP) and theta (GABRQ) chains, each subunit exhibiting distinct physiological and pharmacological properties. Expressed in the brain.

It localises to the cell membrane. The protein localises to the postsynaptic cell membrane. The catalysed reaction is chloride(in) = chloride(out). With respect to regulation, potentiated by histamine. Its function is as follows. Alpha subunit of the heteropentameric ligand-gated chloride channel gated by gamma-aminobutyric acid (GABA), a major inhibitory neurotransmitter in the brain. GABA-gated chloride channels, also named GABA(A) receptors (GABAAR), consist of five subunits arranged around a central pore and contain GABA active binding site(s) located at the alpha and beta subunit interface(s). When activated by GABA, GABAARs selectively allow the flow of chloride anions across the cell membrane down their electrochemical gradient. GABAARs containing alpha-4 are predominantly extrasynaptic, contributing to tonic inhibition in dentate granule cells and thalamic relay neurons. Extrasynaptic alpha-4-containing GABAARs control levels of excitability and network activity. GABAARs containing alpha-4 are often found with the delta or gamma-2 subunits, in combination with beta subunits. GABAAR containing alpha-4-beta-3-delta subunits can simultaneously bind GABA and histamine where histamine binds at the interface of two neighboring beta subunits, which may be involved in the regulation of sleep and wakefulness. The chain is Gamma-aminobutyric acid receptor subunit alpha-4 (GABRA4) from Bos taurus (Bovine).